Reading from the N-terminus, the 404-residue chain is Probable tRNA sulfurtransferase (404 aa).

In terms of domain architecture, THUMP spans 60 to 165 (QPIVEALKLV…DEAAYISYEE (106 aa)). Residues 183–184 (ML), 208–209 (HF), Arg265, Gly287, and Gln296 each bind ATP.

This sequence belongs to the ThiI family.

The protein resides in the cytoplasm. It carries out the reaction [ThiI sulfur-carrier protein]-S-sulfanyl-L-cysteine + a uridine in tRNA + 2 reduced [2Fe-2S]-[ferredoxin] + ATP + H(+) = [ThiI sulfur-carrier protein]-L-cysteine + a 4-thiouridine in tRNA + 2 oxidized [2Fe-2S]-[ferredoxin] + AMP + diphosphate. It catalyses the reaction [ThiS sulfur-carrier protein]-C-terminal Gly-Gly-AMP + S-sulfanyl-L-cysteinyl-[cysteine desulfurase] + AH2 = [ThiS sulfur-carrier protein]-C-terminal-Gly-aminoethanethioate + L-cysteinyl-[cysteine desulfurase] + A + AMP + 2 H(+). The protein operates within cofactor biosynthesis; thiamine diphosphate biosynthesis. Its function is as follows. Catalyzes the ATP-dependent transfer of a sulfur to tRNA to produce 4-thiouridine in position 8 of tRNAs, which functions as a near-UV photosensor. Also catalyzes the transfer of sulfur to the sulfur carrier protein ThiS, forming ThiS-thiocarboxylate. This is a step in the synthesis of thiazole, in the thiamine biosynthesis pathway. The sulfur is donated as persulfide by IscS. In Streptococcus pyogenes serotype M2 (strain MGAS10270), this protein is Probable tRNA sulfurtransferase.